Consider the following 280-residue polypeptide: Undecaprenyl-diphosphatase (280 aa).

8 helical membrane passes run 1-21, 41-61, 87-107, 115-135, 147-167, 186-206, 225-245, and 260-280; these read MTIL…FLPV, FVRA…LVLY, FDLY…GFLF, LGSV…MLFV, ITYP…FLPG, KAAA…ATLL, IVLL…IKFF, and YRIL…SLAV.

It belongs to the UppP family.

Its subcellular location is the cell inner membrane. It carries out the reaction di-trans,octa-cis-undecaprenyl diphosphate + H2O = di-trans,octa-cis-undecaprenyl phosphate + phosphate + H(+). Its function is as follows. Catalyzes the dephosphorylation of undecaprenyl diphosphate (UPP). Confers resistance to bacitracin. The chain is Undecaprenyl-diphosphatase from Porphyromonas gingivalis (strain ATCC 33277 / DSM 20709 / CIP 103683 / JCM 12257 / NCTC 11834 / 2561).